A 163-amino-acid chain; its full sequence is Interleukin-17F (163 aa).

Residues Met1–Ala30 form the signal peptide. N-linked (GlcNAc...) asparagine glycosylation occurs at Asn83. Intrachain disulfides connect Cys102/Cys152 and Cys107/Cys154.

This sequence belongs to the IL-17 family. In terms of assembly, homodimer; disulfide-linked. Heterodimer with IL17A (IL17A-IL17F). Forms complexes with IL17RA and IL17RC receptors with 2:1 binding stoichiometry: two receptor chains for one interleukin molecule. IL17F homodimer forms predominantly complexes with IL17RC homodimer, whereas IL17A-IL17F favors complexes with IL17RA-IL17RC. IL17RA and IL17RC chains cannot distinguish between IL17A and IL17F molecules, potentially enabling the formation of topologically distinct complexes. As to expression, expressed in T-helper 1 and T-helper 2 cells, basophils and mast cells.

The protein localises to the secreted. Its function is as follows. Effector cytokine of innate and adaptive immune system involved in antimicrobial host defense and maintenance of tissue integrity. IL17A-IL17F signals via IL17RA-IL17RC heterodimeric receptor complex, triggering homotypic interaction of IL17RA and IL17RC chains with TRAF3IP2 adapter through SEFIR domains. This leads to downstream TRAF6-mediated activation of NF-kappa-B and MAPkinase pathways ultimately resulting in transcriptional activation of cytokines, chemokines, antimicrobial peptides and matrix metalloproteinases, with potential strong immune inflammation. IL17A-IL17F is primarily involved in host defense against extracellular bacteria and fungi by inducing neutrophilic inflammation. As signature effector cytokine of T-helper 17 cells (Th17), primarily induces neutrophil activation and recruitment at infection and inflammatory sites. Stimulates the production of antimicrobial beta-defensins DEFB1, DEFB103A, and DEFB104A by mucosal epithelial cells, limiting the entry of microbes through the epithelial barriers. IL17F homodimer can signal via IL17RC homodimeric receptor complex, triggering downstream activation of TRAF6 and NF-kappa-B signaling pathway. Via IL17RC induces transcriptional activation of IL33, a potent cytokine that stimulates group 2 innate lymphoid cells and adaptive T-helper 2 cells involved in pulmonary allergic response to fungi. Likely via IL17RC, promotes sympathetic innervation of peripheral organs by coordinating the communication between gamma-delta T cells and parenchymal cells. Stimulates sympathetic innervation of thermogenic adipose tissue by driving TGFB1 expression. Regulates the composition of intestinal microbiota and immune tolerance by inducing antimicrobial proteins that specifically control the growth of commensal Firmicutes and Bacteroidetes. The protein is Interleukin-17F (IL17F) of Homo sapiens (Human).